The following is a 189-amino-acid chain: Marginal zone B- and B1-cell-specific protein (189 aa).

The N-terminal stretch at 1-22 is a signal peptide; sequence MRLSLPLLLLLLGAWAIPGGLG. Cystine bridges form between Cys50/Cys178, Cys53/Cys171, and Cys95/Cys143. A Prevents secretion from ER motif is present at residues 186-189; sequence REEL.

This sequence belongs to the MZB1 family. In terms of assembly, part of the ER chaperone complex, a multi-protein complex in the endoplasmic reticulum containing a large number of molecular chaperones which associates with unassembled incompletely folded immunoglobulin heavy chains. Isoform 2 interacts with CASP2 and CASP9. Interacts with HSP90B1 and PDIA3 in a calcium-dependent manner. In terms of processing, forms an interchain disulfide bond with IgM monomers. Widely expressed with highest levels in adult brain, small intestine and lymphoid tissues such as thymus and spleen. Expression is frequently lower in intestinal-type gastric cancer. In obese patients, more abundant in omental than in subcutaneous fat.

The protein resides in the endoplasmic reticulum lumen. Its subcellular location is the secreted. The protein localises to the cytoplasm. Associates with immunoglobulin M (IgM) heavy and light chains and promotes IgM assembly and secretion. May exert its effect by acting as a molecular chaperone or as an oxidoreductase as it displays a low level of oxidoreductase activity. Isoform 2 may be involved in regulation of apoptosis. Helps to diversify peripheral B-cell functions by regulating Ca(2+) stores, antibody secretion and integrin activation. Its function is as follows. Acts as a hormone-regulated adipokine/pro-inflammatory cytokine that is implicated in causing chronic inflammation, affecting cellular expansion and blunting insulin response in adipocytes. May have a role in the onset of insulin resistance. This chain is Marginal zone B- and B1-cell-specific protein (MZB1), found in Homo sapiens (Human).